We begin with the raw amino-acid sequence, 67 residues long: Putative antitoxin PF1308 (67 aa).

This sequence belongs to the UPF0165 family.

Possibly the antitoxin component of a type II toxin-antitoxin (TA) system. The polypeptide is Putative antitoxin PF1308 (Pyrococcus furiosus (strain ATCC 43587 / DSM 3638 / JCM 8422 / Vc1)).